A 343-amino-acid polypeptide reads, in one-letter code: Glycerol-3-phosphate dehydrogenase [NAD(P)+] (343 aa).

S15, F16, R36, and K110 together coordinate NADPH. Sn-glycerol 3-phosphate contacts are provided by K110 and G138. A142 is an NADPH binding site. The sn-glycerol 3-phosphate site is built by K193, D246, S256, R257, and N258. Catalysis depends on K193, which acts as the Proton acceptor. R257 serves as a coordination point for NADPH. NADPH is bound at residue E283.

It belongs to the NAD-dependent glycerol-3-phosphate dehydrogenase family.

The protein resides in the cytoplasm. The enzyme catalyses sn-glycerol 3-phosphate + NAD(+) = dihydroxyacetone phosphate + NADH + H(+). It catalyses the reaction sn-glycerol 3-phosphate + NADP(+) = dihydroxyacetone phosphate + NADPH + H(+). It functions in the pathway membrane lipid metabolism; glycerophospholipid metabolism. In terms of biological role, catalyzes the reduction of the glycolytic intermediate dihydroxyacetone phosphate (DHAP) to sn-glycerol 3-phosphate (G3P), the key precursor for phospholipid synthesis. The polypeptide is Glycerol-3-phosphate dehydrogenase [NAD(P)+] (Alcanivorax borkumensis (strain ATCC 700651 / DSM 11573 / NCIMB 13689 / SK2)).